Consider the following 517-residue polypeptide: 6-phosphogluconate dehydrogenase, decarboxylating (517 aa).

Residues 35 to 40 (GLAVMG), 58 to 60 (NRT), 100 to 102 (VKA), and Asn-128 contribute to the NADP(+) site. Residues Asn-128 and 154 to 156 (SGG) each bind substrate. Lys-208 (proton acceptor) is an active-site residue. Residue 211–212 (HN) coordinates substrate. Glu-215 functions as the Proton donor in the catalytic mechanism. Residues Tyr-216, Lys-286, Arg-313, Arg-474, and His-480 each coordinate substrate.

The protein belongs to the 6-phosphogluconate dehydrogenase family. Homodimer.

It carries out the reaction 6-phospho-D-gluconate + NADP(+) = D-ribulose 5-phosphate + CO2 + NADPH. It functions in the pathway carbohydrate degradation; pentose phosphate pathway; D-ribulose 5-phosphate from D-glucose 6-phosphate (oxidative stage): step 3/3. Its function is as follows. Catalyzes the oxidative decarboxylation of 6-phosphogluconate to ribulose 5-phosphate and CO(2), with concomitant reduction of NADP to NADPH. In Candida albicans (Yeast), this protein is 6-phosphogluconate dehydrogenase, decarboxylating (DOR14).